A 380-amino-acid chain; its full sequence is Tetratricopeptide repeat protein 19, mitochondrial (380 aa).

The N-terminal 70 residues, 1–70, are a transit peptide targeting the mitochondrion; sequence MFRLLSWSLG…AALAWFSRPA (70 aa). TPR repeat units lie at residues 136-169, 179-212, 237-270, 279-312, and 318-351; these read TYTYDLMANLAFIRGQLENAEQLFKATMSYLLGG, IEISLKLASIYAAQNRQEFAVAGYEFCISTLEEK, GMCLDACARYLLFSKQPSQAQRMYEKALQISEEI, IVLMSDLATTLDAQGRFDEAYIYMQRASDLARQI, and HMVLSNLAAVLMHRERYTQAKEIYQEALKQAKLK.

This sequence belongs to the TTC19 family. In terms of assembly, binds to the mature mitochondrial complex III dimer, after the incorporation of the Rieske protein UQCRFS1. Interacts with UQCRC1 and UQCRFS1. Interacts with ZFYVE26 and CHMP4B. Post-translationally, proteolytically cleaved by PARL.

Its subcellular location is the mitochondrion inner membrane. Its function is as follows. Required for the preservation of the structural and functional integrity of mitochondrial respiratory complex III by allowing the physiological turnover of the Rieske protein UQCRFS1. Involved in the clearance of UQCRFS1 N-terminal fragments, which are produced upon incorporation of UQCRFS1 into the complex III and whose presence is detrimental for its catalytic activity. The sequence is that of Tetratricopeptide repeat protein 19, mitochondrial (TTC19) from Homo sapiens (Human).